A 328-amino-acid chain; its full sequence is L-lactate dehydrogenase (328 aa).

NAD(+) contacts are provided by residues Val-18, Glu-39, Lys-46, Tyr-71, and 85–86; that span reads GA. Residues Gln-88 and Arg-94 each coordinate substrate. NAD(+) contacts are provided by residues Ser-107, 124-126, and Ser-149; that span reads AAN. Substrate is bound at residue 126–129; sequence NPVD. Position 154–157 (154–157) interacts with substrate; that stretch reads DSAR. Beta-D-fructose 1,6-bisphosphate-binding residues include Arg-159 and His-174. Catalysis depends on His-181, which acts as the Proton acceptor. Tyr-226 is modified (phosphotyrosine). Thr-235 serves as a coordination point for substrate.

This sequence belongs to the LDH/MDH superfamily. LDH family. In terms of assembly, homotetramer.

Its subcellular location is the cytoplasm. It carries out the reaction (S)-lactate + NAD(+) = pyruvate + NADH + H(+). It functions in the pathway fermentation; pyruvate fermentation to lactate; (S)-lactate from pyruvate: step 1/1. Allosterically activated by fructose 1,6-bisphosphate (FBP). In terms of biological role, catalyzes the conversion of lactate to pyruvate. The chain is L-lactate dehydrogenase from Streptococcus gordonii (strain Challis / ATCC 35105 / BCRC 15272 / CH1 / DL1 / V288).